The primary structure comprises 243 residues: Tyrosine recombinase XerD-like (243 aa).

In terms of domain architecture, Core-binding (CB) spans Met-1–Tyr-72. The Tyr recombinase domain occupies Leu-85–Arg-243. Residues Lys-149 and Arg-210 contribute to the active site. The active-site O-(3'-phospho-DNA)-tyrosine intermediate is the Tyr-242.

Belongs to the 'phage' integrase family. XerD-like subfamily.

Its subcellular location is the cytoplasm. In terms of biological role, putative tyrosine recombinase. Not involved in the cutting and rejoining of the recombining DNA molecules on dif(SL) site. This is Tyrosine recombinase XerD-like from Streptococcus sanguinis (strain SK36).